Consider the following 466-residue polypeptide: MEGKIIQVLGPVVDVEFESYLPAIFEALDINFEVNGVQKSLVLEVAAHLGGNRVRAIAMDMTEGLVRNQIVKARGKMIEVPVGEEVLGRIFNVVGESIDNLEPLKPSLTWPIHRKAPSFEQQSTKTEMFETGIKVIDLLAPYSKGGKVGLFGGAGVGKTVIIMELIHNVAYKHNGYSVFAGVGERTREGNDLYFEMKEGGVLDKVALCYGQMNEPPGARNRIAFTGLTMAEYFRDEKGLDVLMFIDNIFRYAQSGAEMSALLGRIPSAVGYQPTLAGEMGKLQERIASTKNGSITSVQAVYVPADDLTDPAPASVFAHLDATTVLNRKIAEKGIYPAVDPLDSTSRILSPQMIGEKHYEIATGIQQVLQKYKDLQDIIAILGLDELSEEDKKIVERARKIEKFLSQPFFVAEVFTGSPGKYVTLQETLEGFGGILEGKYDHIPENAFYMVGSIQEVLEKAKNMKNS.

152 to 159 lines the ATP pocket; that stretch reads GGAGVGKT.

It belongs to the ATPase alpha/beta chains family. As to quaternary structure, F-type ATPases have 2 components, CF(1) - the catalytic core - and CF(0) - the membrane proton channel. CF(1) has five subunits: alpha(3), beta(3), gamma(1), delta(1), epsilon(1). CF(0) has three main subunits: a(1), b(2) and c(9-12). The alpha and beta chains form an alternating ring which encloses part of the gamma chain. CF(1) is attached to CF(0) by a central stalk formed by the gamma and epsilon chains, while a peripheral stalk is formed by the delta and b chains.

Its subcellular location is the cell inner membrane. The enzyme catalyses ATP + H2O + 4 H(+)(in) = ADP + phosphate + 5 H(+)(out). Its function is as follows. Produces ATP from ADP in the presence of a proton gradient across the membrane. The catalytic sites are hosted primarily by the beta subunits. The chain is ATP synthase subunit beta from Helicobacter pylori (strain HPAG1).